Here is a 345-residue protein sequence, read N- to C-terminus: Pyruvate dehydrogenase E1 component subunit alpha (345 aa).

In terms of assembly, heterodimer of an alpha and a beta chain. The cofactor is thiamine diphosphate.

The catalysed reaction is N(6)-[(R)-lipoyl]-L-lysyl-[protein] + pyruvate + H(+) = N(6)-[(R)-S(8)-acetyldihydrolipoyl]-L-lysyl-[protein] + CO2. Functionally, the pyruvate dehydrogenase complex catalyzes the overall conversion of pyruvate to acetyl-CoA and CO(2). It contains multiple copies of three enzymatic components: pyruvate dehydrogenase (E1), dihydrolipoamide acetyltransferase (E2) and lipoamide dehydrogenase (E3). The protein is Pyruvate dehydrogenase E1 component subunit alpha (pdhA) of Acholeplasma laidlawii.